Reading from the N-terminus, the 431-residue chain is D-tagatose-1,6-bisphosphate aldolase subunit KbaZ (431 aa).

Belongs to the GatZ/KbaZ family. KbaZ subfamily. In terms of assembly, forms a complex with KbaY.

It participates in carbohydrate metabolism; D-tagatose 6-phosphate degradation; D-glyceraldehyde 3-phosphate and glycerone phosphate from D-tagatose 6-phosphate: step 2/2. In terms of biological role, component of the tagatose-1,6-bisphosphate aldolase KbaYZ that is required for full activity and stability of the Y subunit. Could have a chaperone-like function for the proper and stable folding of KbaY. When expressed alone, KbaZ does not show any aldolase activity. The protein is D-tagatose-1,6-bisphosphate aldolase subunit KbaZ of Citrobacter koseri (strain ATCC BAA-895 / CDC 4225-83 / SGSC4696).